We begin with the raw amino-acid sequence, 255 residues long: uncharacterized protein (255 aa).

The HTH deoR-type domain maps to 4–59 (RNERLNLIRKRVDQYGQVAVKDLAIFLQVTPETVRKDLETLENDKLITRTHGGAIQ). The H-T-H motif DNA-binding region spans 21–40 (VAVKDLAIFLQVTPETVRKD).

This is an uncharacterized protein from Staphylococcus epidermidis (strain ATCC 12228 / FDA PCI 1200).